Reading from the N-terminus, the 530-residue chain is Growth-regulating factor 1 (530 aa).

The tract at residues 1 to 41 is disordered; that stretch reads MDLGVRVSGHETVSSPGQTELGSGFSNKQERSGFDGEDCWR. Over residues 11-27 the composition is skewed to polar residues; it reads ETVSSPGQTELGSGFSN. The span at 28–41 shows a compositional bias: basic and acidic residues; sequence KQERSGFDGEDCWR. In terms of domain architecture, QLQ spans 133–168; that stretch reads PFSLTQWAELEQQALIYKYITANVPVPSSLLLSLKK. Residues 196–240 form the WRC domain; it reads DPEPGRCRRTDGKKWRCSRDAVPDQKYCERHINRGRHRSRKPVEG. 2 short sequence motifs (bipartite nuclear localization signal) span residues 201–211 and 229–236; these read RCRRTDGKKWR and RGRHRSRK. Disordered stretches follow at residues 223-250 and 485-530; these read CERH…NAAA and STFG…APSL. Positions 485–508 are enriched in low complexity; the sequence is STFGSLSNSSSASSTIIGDNNNKN. The span at 519–530 shows a compositional bias: polar residues; sequence TLMNTSATAPSL.

It belongs to the GRF family. Interacts with GIF1 and GIF2. Strongly expressed in actively growing and developing tissues, such as roots, upper stems, and shoot tips containing the shoot apical meristem (SAM) and flower buds. Also expressed in mature flowers, but weakly expressed in mature stems and leaves.

It is found in the nucleus. In terms of biological role, transcription activator that plays a role in the regulation of cell expansion in leaf and cotyledons tissues. Component of a network formed by miR396, the GRFs and their interacting factors (GIFs) acting in the regulation of meristem function, at least partially through the control of cell proliferation. microRNA396-GRF1/GRF3 regulatory module acts as a developmental regulator in the reprogramming of root cells during cyst nematode infection, leading to the formation of the syncytium. The sequence is that of Growth-regulating factor 1 (GRF1) from Arabidopsis thaliana (Mouse-ear cress).